The sequence spans 72 residues: Translation initiation factor IF-1 (72 aa).

One can recognise an S1-like domain in the interval 1–72; it reads MAKDDVIEIE…TKGRITYRFK (72 aa).

Belongs to the IF-1 family. In terms of assembly, component of the 30S ribosomal translation pre-initiation complex which assembles on the 30S ribosome in the order IF-2 and IF-3, IF-1 and N-formylmethionyl-tRNA(fMet); mRNA recruitment can occur at any time during PIC assembly.

The protein resides in the cytoplasm. Its function is as follows. One of the essential components for the initiation of protein synthesis. Stabilizes the binding of IF-2 and IF-3 on the 30S subunit to which N-formylmethionyl-tRNA(fMet) subsequently binds. Helps modulate mRNA selection, yielding the 30S pre-initiation complex (PIC). Upon addition of the 50S ribosomal subunit IF-1, IF-2 and IF-3 are released leaving the mature 70S translation initiation complex. The polypeptide is Translation initiation factor IF-1 (Latilactobacillus sakei subsp. sakei (strain 23K) (Lactobacillus sakei subsp. sakei)).